Consider the following 274-residue polypeptide: Undecaprenyl-diphosphatase (274 aa).

Helical transmembrane passes span 1–21 (MDWL…FLPI), 42–62 (VKDT…LVYY), 81–101 (LWLG…LFGD), 107–127 (LFRP…MWLL), 142–162 (ISAG…LWPG), 184–204 (TKFS…LDFI), 213–233 (IGVV…YFAI), and 248–268 (FAVY…RGVL).

The protein belongs to the UppP family.

It is found in the cell membrane. The enzyme catalyses di-trans,octa-cis-undecaprenyl diphosphate + H2O = di-trans,octa-cis-undecaprenyl phosphate + phosphate + H(+). Functionally, catalyzes the dephosphorylation of undecaprenyl diphosphate (UPP). Confers resistance to bacitracin. The protein is Undecaprenyl-diphosphatase of Deinococcus radiodurans (strain ATCC 13939 / DSM 20539 / JCM 16871 / CCUG 27074 / LMG 4051 / NBRC 15346 / NCIMB 9279 / VKM B-1422 / R1).